The chain runs to 164 residues: UPF0114 protein YqhA (164 aa).

3 helical membrane passes run 15 to 35 (LLAP…LKFF), 53 to 73 (LILV…LVMV), and 136 to 156 (LMWY…MGYL).

This sequence belongs to the UPF0114 family.

The protein localises to the cell membrane. The protein is UPF0114 protein YqhA of Salmonella agona (strain SL483).